Reading from the N-terminus, the 220-residue chain is Ribose-5-phosphate isomerase A (220 aa).

Substrate-binding positions include 28–31, 81–84, and 94–97; these read TGST, DGAD, and KGGG. Glu103 (proton acceptor) is an active-site residue. Lys121 contacts substrate.

This sequence belongs to the ribose 5-phosphate isomerase family. As to quaternary structure, homodimer.

It catalyses the reaction aldehydo-D-ribose 5-phosphate = D-ribulose 5-phosphate. The protein operates within carbohydrate degradation; pentose phosphate pathway; D-ribose 5-phosphate from D-ribulose 5-phosphate (non-oxidative stage): step 1/1. Its function is as follows. Catalyzes the reversible conversion of ribose-5-phosphate to ribulose 5-phosphate. In Shewanella putrefaciens (strain CN-32 / ATCC BAA-453), this protein is Ribose-5-phosphate isomerase A.